The following is a 100-amino-acid chain: Urease subunit gamma (100 aa).

The protein belongs to the urease gamma subunit family. Heterotrimer of UreA (gamma), UreB (beta) and UreC (alpha) subunits. Three heterotrimers associate to form the active enzyme.

The protein resides in the cytoplasm. The catalysed reaction is urea + 2 H2O + H(+) = hydrogencarbonate + 2 NH4(+). The protein operates within nitrogen metabolism; urea degradation; CO(2) and NH(3) from urea (urease route): step 1/1. The polypeptide is Urease subunit gamma (Haemophilus influenzae (strain ATCC 51907 / DSM 11121 / KW20 / Rd)).